The chain runs to 334 residues: MKRISLTQYLIEEQRLHNNIPAELRLLIEVVARACKTISHAVGKGALGEVLGSAQSENVQGEVQKKLDIISNDILLEANEWGGHLAAMASEEMETIHPIPNRYPMGEYLLLFDPLDGSSNIDVNVSIGTIFSVLKAADGMQAAKEADFLQAGSKQVVAGYAVYGPQTVLVLTTGNGVQCFTLDREMGSWVMTQKNMQIPADTKEFAINASNARHWYPPVKRYVDEMLAGTTGPRGKDFNMRWIASMVADVHRILNRGGIFMYPADAREPDKPGKLRLMYEANPMAFLVEQAGGAATDGQQRILDIQPEKLHQRVPVFLGSKNEVDLVTSYHKTK.

Positions 91, 113, 115, and 116 each coordinate Mg(2+). Residues 116 to 119 (DGSS), N208, and K274 each bind substrate. E280 contributes to the Mg(2+) binding site.

The protein belongs to the FBPase class 1 family. In terms of assembly, homotetramer. The cofactor is Mg(2+).

It localises to the cytoplasm. The catalysed reaction is beta-D-fructose 1,6-bisphosphate + H2O = beta-D-fructose 6-phosphate + phosphate. The protein operates within carbohydrate biosynthesis; gluconeogenesis. The protein is Fructose-1,6-bisphosphatase class 1 of Herminiimonas arsenicoxydans.